The following is a 374-amino-acid chain: Golgi-associated kinase 1B (374 aa).

Over Met-1–Arg-38 the chain is Cytoplasmic. A helical; Signal-anchor for type II membrane protein transmembrane segment spans residues Ala-39–Gly-61. At Ser-62–Arg-374 the chain is on the extracellular side. Residues Val-136–Ala-146 show a composition bias toward basic residues. The interval Val-136–Ser-177 is disordered. Residues Val-166–Ser-177 are compositionally biased toward polar residues. N-linked (GlcNAc...) asparagine glycosylation is found at Asn-281 and Asn-314.

The protein belongs to the GASK family.

It localises to the golgi apparatus membrane. This is Golgi-associated kinase 1B from Xenopus laevis (African clawed frog).